A 79-amino-acid chain; its full sequence is Probable [Fe-S]-dependent transcriptional repressor (79 aa).

Iron-sulfur cluster-binding residues include C56, C61, C64, and C70.

The protein belongs to the FeoC family.

Its function is as follows. May function as a transcriptional regulator that controls feoABC expression. This chain is Probable [Fe-S]-dependent transcriptional repressor, found in Serratia proteamaculans (strain 568).